Consider the following 103-residue polypeptide: Putative sulfurtransferase YtwF (103 aa).

In terms of domain architecture, Rhodanese spans 17–100 (ADEELYLIDV…GMMAWEGETK (84 aa)). The Cysteine persulfide intermediate role is filled by C65.

The polypeptide is Putative sulfurtransferase YtwF (ytwF) (Bacillus subtilis (strain 168)).